The sequence spans 471 residues: UTP--glucose-1-phosphate uridylyltransferase (471 aa).

UTP-binding positions include 87 to 90 (LNGG), Lys-101, Gln-164, and Gly-193. Residue 89 to 90 (GG) participates in substrate binding. Residues His-194 and 222–224 (NSD) contribute to the substrate site. Residues Asp-224 and Lys-362 each coordinate UTP.

It belongs to the UDPGP type 1 family.

It is found in the cytoplasm. It catalyses the reaction alpha-D-glucose 1-phosphate + UTP + H(+) = UDP-alpha-D-glucose + diphosphate. In terms of biological role, plays a central role as a glucosyl donor in cellular metabolic pathways. This chain is UTP--glucose-1-phosphate uridylyltransferase, found in Pyrus pyrifolia (Chinese pear).